Consider the following 388-residue polypeptide: Myosin light chain kinase family member 4 (388 aa).

One can recognise a Protein kinase domain in the interval 106 to 361 (VSKTEILGGG…ASEALKHPWL (256 aa)). ATP-binding positions include 112–120 (LGGGRFGQV) and K135. Residue D227 is the Proton acceptor of the active site.

It belongs to the protein kinase superfamily. CAMK Ser/Thr protein kinase family.

The enzyme catalyses L-seryl-[protein] + ATP = O-phospho-L-seryl-[protein] + ADP + H(+). It catalyses the reaction L-threonyl-[protein] + ATP = O-phospho-L-threonyl-[protein] + ADP + H(+). This chain is Myosin light chain kinase family member 4 (MYLK4), found in Homo sapiens (Human).